Reading from the N-terminus, the 125-residue chain is Histone H2A (125 aa).

The span at methionine 1–serine 18 shows a compositional bias: basic residues. The segment at methionine 1–alanine 21 is disordered. The residue at position 2 (serine 2) is an N-acetylserine. Serine 2 carries the post-translational modification Phosphoserine. Lysine 119 is covalently cross-linked (Glycyl lysine isopeptide (Lys-Gly) (interchain with G-Cter in ubiquitin)).

This sequence belongs to the histone H2A family. As to quaternary structure, the nucleosome is a histone octamer containing two molecules each of H2A, H2B, H3 and H4 assembled in one H3-H4 heterotetramer and two H2A-H2B heterodimers. The octamer wraps approximately 147 bp of DNA. In terms of processing, monoubiquitination of Lys-119 gives a specific tag for epigenetic transcriptional repression. Post-translationally, phosphorylation on Ser-2 is enhanced during mitosis. Phosphorylation on Ser-2 directly represses transcription.

The protein localises to the nucleus. Its subcellular location is the chromosome. Functionally, core component of nucleosome. Nucleosomes wrap and compact DNA into chromatin, limiting DNA accessibility to the cellular machineries which require DNA as a template. Histones thereby play a central role in transcription regulation, DNA repair, DNA replication and chromosomal stability. DNA accessibility is regulated via a complex set of post-translational modifications of histones, also called histone code, and nucleosome remodeling. The protein is Histone H2A of Chironomus thummi thummi (Midge).